The primary structure comprises 444 residues: 23S rRNA (uracil(1939)-C(5))-methyltransferase RlmD (444 aa).

The TRAM domain maps to 5–67 (RNRLDRTPFQ…RHFDEAKTVE (63 aa)). C80, C86, C89, and C168 together coordinate [4Fe-4S] cluster. The S-adenosyl-L-methionine site is built by Q276, F305, N310, E326, D353, and D374. C400 acts as the Nucleophile in catalysis.

Belongs to the class I-like SAM-binding methyltransferase superfamily. RNA M5U methyltransferase family. RlmD subfamily.

It carries out the reaction uridine(1939) in 23S rRNA + S-adenosyl-L-methionine = 5-methyluridine(1939) in 23S rRNA + S-adenosyl-L-homocysteine + H(+). Functionally, catalyzes the formation of 5-methyl-uridine at position 1939 (m5U1939) in 23S rRNA. The sequence is that of 23S rRNA (uracil(1939)-C(5))-methyltransferase RlmD from Xanthomonas euvesicatoria pv. vesicatoria (strain 85-10) (Xanthomonas campestris pv. vesicatoria).